Here is a 293-residue protein sequence, read N- to C-terminus: EID1-like F-box protein 1 (293 aa).

The F-box domain maps to 16-68; that stretch reads QCTKGHLNEDVLLLVFQHLNWNPKLVATLSCVCRWFDDFAKRVLWKEFCKTRA. The tract at residues 245–293 is disordered; it reads AIPSEDNNHTEKKQDNGFPRENVLKRRNSLLGGSENGPPPQKRLTNPNQ. Positions 250–259 are enriched in basic and acidic residues; sequence DNNHTEKKQD.

The polypeptide is EID1-like F-box protein 1 (EDL1) (Arabidopsis thaliana (Mouse-ear cress)).